The primary structure comprises 122 residues: Large ribosomal subunit protein uL18 (122 aa).

Belongs to the universal ribosomal protein uL18 family. As to quaternary structure, part of the 50S ribosomal subunit; part of the 5S rRNA/L5/L18/L25 subcomplex. Contacts the 5S and 23S rRNAs.

This is one of the proteins that bind and probably mediate the attachment of the 5S RNA into the large ribosomal subunit, where it forms part of the central protuberance. The polypeptide is Large ribosomal subunit protein uL18 (Lachnoclostridium phytofermentans (strain ATCC 700394 / DSM 18823 / ISDg) (Clostridium phytofermentans)).